The primary structure comprises 464 residues: Mitogen-activated protein kinase 10 (464 aa).

The 296-residue stretch at 64-359 folds into the Protein kinase domain; that stretch reads YQNLKPIGSG…VDDALQHPYI (296 aa). ATP contacts are provided by residues 70–78 and K93; that span reads IGSGAQGIV. D189 serves as the catalytic Proton acceptor. Residue T221 is modified to Phosphothreonine; by MAP2K7. The TXY motif lies at 221–223; that stretch reads TPY. Y223 is subject to Phosphotyrosine; by MAP2K4. A disordered region spans residues 405–464; the sequence is TKNGVVKGQPSPSGAAVNSSESLPPSSSVNDISSMSTDQTLASDTDSSLEASAGPLGCCR. Low complexity predominate over residues 423–432; the sequence is SSESLPPSSS. Residues 433–454 show a composition bias toward polar residues; the sequence is VNDISSMSTDQTLASDTDSSLE. S-palmitoyl cysteine attachment occurs at residues C462 and C463.

The protein belongs to the protein kinase superfamily. CMGC Ser/Thr protein kinase family. MAP kinase subfamily. Interacts with MAPK8IP1/JIP-1 and MAPK8IP3/JIP-3/JSAP1. Interacts with SPAG9/MAPK8IP4/JIP4. Interacts with HDAC9 and MAPKBP1. Interacts with ARRB2; the interaction enhances MAPK10 activation by MAP3K5. Interacts with SARM1. Interacts with JUND; interaction is inhibited in the presence of MEN1. Requires Mg(2+) as cofactor. Dually phosphorylated on Thr-221 and Tyr-223 by MAP2K4 and MAP2K7, which activates the enzyme. MAP2K7 shows a strong preference for Thr-221 while MAP2K4 phosphorylates Tyr-223 preferentially. Weakly autophosphorylated on threonine and tyrosine residues in vitro. In terms of processing, palmitoylation regulates subcellular location and axonal development.

It localises to the cytoplasm. Its subcellular location is the membrane. The protein localises to the nucleus. The protein resides in the mitochondrion. It carries out the reaction L-seryl-[protein] + ATP = O-phospho-L-seryl-[protein] + ADP + H(+). The catalysed reaction is L-threonyl-[protein] + ATP = O-phospho-L-threonyl-[protein] + ADP + H(+). Activated by threonine and tyrosine phosphorylation by two dual specificity kinases, MAP2K4 and MAP2K7. MAP2K7 phosphorylates MAPK10 on Thr-221 causing a conformational change and a large increase in Vmax for the enzyme. MAP2K4 then phosphorylates Tyr-223 resulting in a further increase in Vmax. Inhibited by dual specificity phosphatases, such as DUSP1. Inhibited by HDAC9. In terms of biological role, serine/threonine-protein kinase involved in various processes such as neuronal proliferation, differentiation, migration and programmed cell death. Extracellular stimuli such as pro-inflammatory cytokines or physical stress stimulate the stress-activated protein kinase/c-Jun N-terminal kinase (SAP/JNK) signaling pathway. In this cascade, two dual specificity kinases MAP2K4/MKK4 and MAP2K7/MKK7 phosphorylate and activate MAPK10/JNK3. In turn, MAPK10/JNK3 phosphorylates a number of transcription factors, primarily components of AP-1 such as JUN and ATF2 and thus regulates AP-1 transcriptional activity. Plays regulatory roles in the signaling pathways during neuronal apoptosis. Phosphorylates the neuronal microtubule regulator STMN2. Acts in the regulation of the amyloid-beta precursor protein/APP signaling during neuronal differentiation by phosphorylating APP. Also participates in neurite growth in spiral ganglion neurons. Phosphorylates the CLOCK-BMAL1 heterodimer and plays a role in the photic regulation of the circadian clock. Phosphorylates JUND and this phosphorylation is inhibited in the presence of MEN1. The sequence is that of Mitogen-activated protein kinase 10 (Mapk10) from Rattus norvegicus (Rat).